The following is a 143-amino-acid chain: Transcriptional regulator MraZ (143 aa).

2 SpoVT-AbrB domains span residues 5-47 (EYEH…TLEE) and 76-119 (AIEV…DRET).

Belongs to the MraZ family. As to quaternary structure, forms oligomers.

It localises to the cytoplasm. Its subcellular location is the nucleoid. This chain is Transcriptional regulator MraZ, found in Staphylococcus haemolyticus (strain JCSC1435).